The sequence spans 213 residues: Small ribosomal subunit protein uS4 (213 aa).

The tract at residues 16–53 (GTDLGLKSGVKPYDVKTKKSARPPGQHGVSRNKSSEYS) is disordered. Residues 44–53 (VSRNKSSEYS) show a composition bias toward polar residues. Positions 97–163 (SRLDNVVYRM…EKSREQLRIK (67 aa)) constitute an S4 RNA-binding domain.

This sequence belongs to the universal ribosomal protein uS4 family. Part of the 30S ribosomal subunit. Contacts protein S5. The interaction surface between S4 and S5 is involved in control of translational fidelity.

Its function is as follows. One of the primary rRNA binding proteins, it binds directly to 16S rRNA where it nucleates assembly of the body of the 30S subunit. With S5 and S12 plays an important role in translational accuracy. In Psychrobacter cryohalolentis (strain ATCC BAA-1226 / DSM 17306 / VKM B-2378 / K5), this protein is Small ribosomal subunit protein uS4.